An 858-amino-acid chain; its full sequence is Cone cGMP-specific 3',5'-cyclic phosphodiesterase subunit alpha' (858 aa).

2 GAF domains span residues threonine 75 to leucine 224 and aspartate 256 to leucine 433. Residues serine 97, aspartate 116, aspartate 169–threonine 172, and threonine 176 each bind 3',5'-cyclic GMP. The PDEase domain occupies glutamate 486–tyrosine 819. Histidine 562 acts as the Proton donor in catalysis. Histidine 566, histidine 602, aspartate 603, and aspartate 723 together coordinate a divalent metal cation. The segment covering alanine 830–serine 852 has biased composition (basic and acidic residues). A disordered region spans residues alanine 830 to leucine 858. Cysteine methyl ester is present on cysteine 855. The S-geranylgeranyl cysteine moiety is linked to residue cysteine 855. The propeptide at leucine 856–leucine 858 is removed in mature form.

It belongs to the cyclic nucleotide phosphodiesterase family. In terms of assembly, composed of two alpha' subunits that are associated with 3 smaller proteins of 11, 13, and 15 kDa. The cofactor is a divalent metal cation.

It localises to the cell membrane. It carries out the reaction 3',5'-cyclic GMP + H2O = GMP + H(+). Functionally, as cone-specific cGMP phosphodiesterase, it plays an essential role in light detection and cone phototransduction by rapidly decreasing intracellular levels of cGMP. The sequence is that of Cone cGMP-specific 3',5'-cyclic phosphodiesterase subunit alpha' (PDE6C) from Homo sapiens (Human).